An 833-amino-acid chain; its full sequence is Leucine--tRNA ligase (833 aa).

The 'HIGH' region signature appears at 41–52 (PYPSGAGLHVGH). The 'KMSKS' region motif lies at 610 to 614 (KMSKS). Residue lysine 613 coordinates ATP.

The protein belongs to the class-I aminoacyl-tRNA synthetase family.

The protein resides in the cytoplasm. It carries out the reaction tRNA(Leu) + L-leucine + ATP = L-leucyl-tRNA(Leu) + AMP + diphosphate. The chain is Leucine--tRNA ligase from Streptococcus pneumoniae serotype 4 (strain ATCC BAA-334 / TIGR4).